A 234-amino-acid chain; its full sequence is Leucyl/phenylalanyl-tRNA--protein transferase (234 aa).

This sequence belongs to the L/F-transferase family.

It is found in the cytoplasm. It catalyses the reaction N-terminal L-lysyl-[protein] + L-leucyl-tRNA(Leu) = N-terminal L-leucyl-L-lysyl-[protein] + tRNA(Leu) + H(+). The catalysed reaction is N-terminal L-arginyl-[protein] + L-leucyl-tRNA(Leu) = N-terminal L-leucyl-L-arginyl-[protein] + tRNA(Leu) + H(+). The enzyme catalyses L-phenylalanyl-tRNA(Phe) + an N-terminal L-alpha-aminoacyl-[protein] = an N-terminal L-phenylalanyl-L-alpha-aminoacyl-[protein] + tRNA(Phe). Functions in the N-end rule pathway of protein degradation where it conjugates Leu, Phe and, less efficiently, Met from aminoacyl-tRNAs to the N-termini of proteins containing an N-terminal arginine or lysine. This is Leucyl/phenylalanyl-tRNA--protein transferase from Salmonella arizonae (strain ATCC BAA-731 / CDC346-86 / RSK2980).